A 160-amino-acid polypeptide reads, in one-letter code: MGVFTYESEFTSEIPPPRLFKAFVLDADNLVPKIAPQAIKHSEILEGDGGPGTIKKITFGEGSQYGYVKHKIDSIDKENYSYSYTLIEGDALGDTLEKISYETKLVASPSGGSIIKSTSHYHTKGNVEIKEEHVKAGKEKASNLFKLIETYLKGHPDAYN.

Belongs to the BetVI family.

The protein is Major allergen Pru av 1 (PRUA1) of Prunus avium (Cherry).